A 93-amino-acid polypeptide reads, in one-letter code: Small ribosomal subunit protein uS19 (93 aa).

Belongs to the universal ribosomal protein uS19 family.

Protein S19 forms a complex with S13 that binds strongly to the 16S ribosomal RNA. This is Small ribosomal subunit protein uS19 from Salinispora tropica (strain ATCC BAA-916 / DSM 44818 / JCM 13857 / NBRC 105044 / CNB-440).